Reading from the N-terminus, the 733-residue chain is Catalase-peroxidase (733 aa).

The segment at residues 96–219 is a cross-link (tryptophyl-tyrosyl-methioninium (Trp-Tyr) (with M-245)); sequence WHSAGTYRTG…LAAVQMGLIY (124 aa). Histidine 97 acts as the Proton acceptor in catalysis. The segment at residues 219 to 245 is a cross-link (tryptophyl-tyrosyl-methioninium (Tyr-Met) (with W-96)); that stretch reads YVNPEGPNGNPDPLAAAKDIRETFARM. Histidine 260 lines the heme b pocket.

The protein belongs to the peroxidase family. Peroxidase/catalase subfamily. In terms of assembly, homodimer or homotetramer. The cofactor is heme b. In terms of processing, formation of the three residue Trp-Tyr-Met cross-link is important for the catalase, but not the peroxidase activity of the enzyme.

It catalyses the reaction H2O2 + AH2 = A + 2 H2O. The catalysed reaction is 2 H2O2 = O2 + 2 H2O. Bifunctional enzyme with both catalase and broad-spectrum peroxidase activity. The protein is Catalase-peroxidase of Geobacter sp. (strain M21).